The chain runs to 296 residues: dTDP-4-dehydrorhamnose reductase (296 aa).

NADH-binding positions include 10–12 (GQI), 35–36 (DL), and 59–61 (AYT). NADPH is bound by residues 11 to 12 (QI), 35 to 36 (DL), and 59 to 61 (AYT). 100-101 (TD) serves as a coordination point for dTDP-beta-L-rhamnose. The NADH site is built by tyrosine 124 and lysine 128. Tyrosine 124 and lysine 128 together coordinate NADPH. The Proton donor/acceptor role is filled by tyrosine 124. A dTDP-beta-L-rhamnose-binding site is contributed by tryptophan 149.

Belongs to the dTDP-4-dehydrorhamnose reductase family. Homodimer. Mg(2+) serves as cofactor.

It catalyses the reaction dTDP-beta-L-rhamnose + NADP(+) = dTDP-4-dehydro-beta-L-rhamnose + NADPH + H(+). The protein operates within carbohydrate biosynthesis; dTDP-L-rhamnose biosynthesis. Its function is as follows. Involved in the biosynthesis of the dTDP-L-rhamnose which is an important component of lipopolysaccharide (LPS). Catalyzes the reduction of dTDP-6-deoxy-L-lyxo-4-hexulose to yield dTDP-L-rhamnose. RmlD uses NADH and NADPH nearly equally well. The chain is dTDP-4-dehydrorhamnose reductase from Sinorhizobium fredii (strain NBRC 101917 / NGR234).